The following is a 204-amino-acid chain: Leucyl/phenylalanyl-tRNA--protein transferase (204 aa).

The protein belongs to the L/F-transferase family.

It localises to the cytoplasm. It carries out the reaction N-terminal L-lysyl-[protein] + L-leucyl-tRNA(Leu) = N-terminal L-leucyl-L-lysyl-[protein] + tRNA(Leu) + H(+). It catalyses the reaction N-terminal L-arginyl-[protein] + L-leucyl-tRNA(Leu) = N-terminal L-leucyl-L-arginyl-[protein] + tRNA(Leu) + H(+). The enzyme catalyses L-phenylalanyl-tRNA(Phe) + an N-terminal L-alpha-aminoacyl-[protein] = an N-terminal L-phenylalanyl-L-alpha-aminoacyl-[protein] + tRNA(Phe). Its function is as follows. Functions in the N-end rule pathway of protein degradation where it conjugates Leu, Phe and, less efficiently, Met from aminoacyl-tRNAs to the N-termini of proteins containing an N-terminal arginine or lysine. The polypeptide is Leucyl/phenylalanyl-tRNA--protein transferase (Brucella melitensis biotype 2 (strain ATCC 23457)).